We begin with the raw amino-acid sequence, 332 residues long: Biotin synthase (332 aa).

Residues 46 to 275 enclose the Radical SAM core domain; the sequence is SDIQRASLLS…RARVRLSAGR (230 aa). C61, C65, and C68 together coordinate [4Fe-4S] cluster. 4 residues coordinate [2Fe-2S] cluster: C106, C138, C198, and R270.

The protein belongs to the radical SAM superfamily. Biotin synthase family. In terms of assembly, homodimer. Requires [4Fe-4S] cluster as cofactor. [2Fe-2S] cluster is required as a cofactor.

It carries out the reaction (4R,5S)-dethiobiotin + (sulfur carrier)-SH + 2 reduced [2Fe-2S]-[ferredoxin] + 2 S-adenosyl-L-methionine = (sulfur carrier)-H + biotin + 2 5'-deoxyadenosine + 2 L-methionine + 2 oxidized [2Fe-2S]-[ferredoxin]. It participates in cofactor biosynthesis; biotin biosynthesis; biotin from 7,8-diaminononanoate: step 2/2. In terms of biological role, catalyzes the conversion of dethiobiotin (DTB) to biotin by the insertion of a sulfur atom into dethiobiotin via a radical-based mechanism. This is Biotin synthase from Methylobacterium sp. (strain 4-46).